Reading from the N-terminus, the 93-residue chain is Small ribosomal subunit protein uS19 (93 aa).

This sequence belongs to the universal ribosomal protein uS19 family.

Functionally, protein S19 forms a complex with S13 that binds strongly to the 16S ribosomal RNA. This chain is Small ribosomal subunit protein uS19, found in Saccharopolyspora erythraea (strain ATCC 11635 / DSM 40517 / JCM 4748 / NBRC 13426 / NCIMB 8594 / NRRL 2338).